Reading from the N-terminus, the 520-residue chain is Calcium and calcium/calmodulin-dependent serine/threonine-protein kinase (520 aa).

Residues 13-302 (YEVVDVLGKG…ANDLLKHPWV (290 aa)) enclose the Protein kinase domain. ATP is bound by residues 19-27 (LGKGGFSVV) and K44. D167 serves as the catalytic Proton acceptor. A helical transmembrane segment spans residues 227–243 (MWSLGVILYILLSGCPP). T267 is modified (phosphothreonine; by autocatalysis). The segment at 325–338 (ARRKLRAAAIASVL) is calmodulin-binding. Positions 346 to 368 (TKKLKNLLGSHDMKSEELENLRA) form a coiled coil. EF-hand domains follow at residues 361-395 (EELE…MKMN), 396-431 (SLIP…LRNS), 432-467 (QGDD…LPED), and 474-509 (TEPG…DSSL). Ca(2+) contacts are provided by D409, N411, D413, T415, E420, D445, D447, S449, C451, E456, D487, N489, D491, and E498.

This sequence belongs to the protein kinase superfamily. CAMK Ser/Thr protein kinase family. CaMK subfamily. In terms of processing, autophosphorylation stimulated by calcium and inhibited by calcium/calmodulin. Occurs probably by an intermolecular mechanism.

The protein localises to the membrane. It catalyses the reaction L-seryl-[protein] + ATP = O-phospho-L-seryl-[protein] + ADP + H(+). It carries out the reaction L-threonyl-[protein] + ATP = O-phospho-L-threonyl-[protein] + ADP + H(+). With respect to regulation, activated by calcium/calmodulin binding after calcium-induced autophosphorylation. Autophosphorylation is associated with a time-dependent loss of kinase activity sensitive to reaction pH and ATP concentration. In vitro inactivation leads to the formation of network-like structures. Functionally, protein kinase that may be involved in microsporogenesis. In Lilium longiflorum (Trumpet lily), this protein is Calcium and calcium/calmodulin-dependent serine/threonine-protein kinase (CCAMK).